The sequence spans 255 residues: Wtf element wtf15 (255 aa).

Residues 19 to 78 are disordered; it reads KAGHEIDLEGSPPSEHNSEEKSTLPSNSDILTSANPVSQASETPDHSIESNTGSTQSPTS. Composition is skewed to polar residues over residues 41–60 and 67–78; these read TLPS…QASE and ESNTGSTQSPTS. 4 helical membrane-spanning segments follow: residues 85–105, 112–132, 162–182, and 187–208; these read FSFC…CVLP, FLIA…SGSI, FLKT…LVLL, and WGWK…SFCL.

Belongs to the WTF family.

It localises to the spore membrane. Functionally, may act in meiotic drive. The sequence is that of Wtf element wtf15 from Schizosaccharomyces pombe (strain 972 / ATCC 24843) (Fission yeast).